A 230-amino-acid chain; its full sequence is Probable cytokinin riboside 5'-monophosphate phosphoribohydrolase LOG4 (230 aa).

Residues Glu-91, Arg-109–Lys-110, and Gly-126–Glu-132 contribute to the substrate site.

Belongs to the LOG family.

It catalyses the reaction N(6)-(dimethylallyl)adenosine 5'-phosphate + H2O = N(6)-dimethylallyladenine + D-ribose 5-phosphate. It carries out the reaction 9-ribosyl-trans-zeatin 5'-phosphate + H2O = trans-zeatin + D-ribose 5-phosphate. Cytokinin-activating enzyme working in the direct activation pathway. Phosphoribohydrolase that converts inactive cytokinin nucleotides to the biologically active free-base forms. This chain is Probable cytokinin riboside 5'-monophosphate phosphoribohydrolase LOG4 (LOGL4), found in Oryza sativa subsp. japonica (Rice).